A 394-amino-acid polypeptide reads, in one-letter code: Probable pectate lyase 16 (394 aa).

An N-terminal signal peptide occupies residues 1–22; it reads MTLFTVSCLLVVLFLCHSLVHA. Ca(2+)-binding residues include D192, D216, and D220. The active site involves R272.

The protein belongs to the polysaccharide lyase 1 family. Requires Ca(2+) as cofactor.

The catalysed reaction is Eliminative cleavage of (1-&gt;4)-alpha-D-galacturonan to give oligosaccharides with 4-deoxy-alpha-D-galact-4-enuronosyl groups at their non-reducing ends.. It participates in glycan metabolism; pectin degradation; 2-dehydro-3-deoxy-D-gluconate from pectin: step 2/5. The chain is Probable pectate lyase 16 from Arabidopsis thaliana (Mouse-ear cress).